Here is a 341-residue protein sequence, read N- to C-terminus: HTH-type transcriptional repressor PurR (341 aa).

The 55-residue stretch at A2–V56 folds into the HTH lacI-type domain. A DNA-binding region (H-T-H motif) is located at residues I4–N23. A DNA-binding region spans residues S48–V56. The hypoxanthine site is built by Y73, R190, T192, F221, and D275.

Homodimer.

The protein operates within purine metabolism; purine nucleotide biosynthesis [regulation]. Its function is as follows. Is the main repressor of the genes involved in the de novo synthesis of purine nucleotides, regulating purB, purC, purEK, purF, purHD, purL, purMN and guaBA expression. PurR is allosterically activated to bind its cognate DNA by binding the purine corepressors, hypoxanthine or guanine, thereby effecting transcription repression. This chain is HTH-type transcriptional repressor PurR, found in Salmonella arizonae (strain ATCC BAA-731 / CDC346-86 / RSK2980).